The chain runs to 429 residues: Enolase (429 aa).

Gln-163 contributes to the (2R)-2-phosphoglycerate binding site. The active-site Proton donor is the Glu-205. Positions 242, 287, and 314 each coordinate Mg(2+). Lys-339, Arg-368, Ser-369, and Lys-390 together coordinate (2R)-2-phosphoglycerate. Catalysis depends on Lys-339, which acts as the Proton acceptor.

The protein belongs to the enolase family. Mg(2+) serves as cofactor.

The protein resides in the cytoplasm. It is found in the secreted. It localises to the cell surface. It catalyses the reaction (2R)-2-phosphoglycerate = phosphoenolpyruvate + H2O. Its pathway is carbohydrate degradation; glycolysis; pyruvate from D-glyceraldehyde 3-phosphate: step 4/5. Catalyzes the reversible conversion of 2-phosphoglycerate (2-PG) into phosphoenolpyruvate (PEP). It is essential for the degradation of carbohydrates via glycolysis. In Anaeromyxobacter sp. (strain Fw109-5), this protein is Enolase.